The following is a 691-amino-acid chain: MARAFPLERVRNIGIAAHIDAGKTTCTERILFYSGVVHKMGEVHDGAAVTDWMAQERERGITITAAAISTTWDDHRINIIDTPGHVDFTIEVERSMRVLDGVIAVFCAVGGVQPQSETVWRQADRYSVPRMVFVNKMDRTGADFLKVHGQIKDRLKANAVPIQLPIGAENDLKGIIDLVENKAYIYKDDLGKDIEQTEVPSDMVDLVSDWRSKLMESIAETEEELLEAFLENGELTIEQLKSGIREGVLKHGVVPMLCGSAFKNKGVQLLLDAVVNYLPAPVDVPPIQGLLPNGKEAVRPSDDGAPFSALAFKVMADPYGKLTFVRMYSGVLEKGSYVLNSTKDAKERISRLIILKADDREEVDELRAGDLGAVLGLKNTTTGDTLCASEEAIVLETLYIPEPVISVAVEPKTKSDMEKLGKALTSLSEEDPTFRVSTDQETNQTVIAGMGELHLEILVDRMLREFKVEANIGAPQVSYRETIRASSSGEGKFARQTGGKGQYGHVVIEVEPGEPGTGFEFVNKIVGGSVPKEYIKPAESGMRETCESGVIAGYPLIDVKVTLVDGSYHDVDSSEMAFKIAGSMAFKDGIKKCNPVLLEPMMKVEVEVPEDFLGSIIGDLSSRRGQVEGQSIEDGQSKVQSKVPLAEMFGYATQLRSMTQGRGIFSMEFSTYEEVPRNVAEAIISKNQGNS.

The tr-type G domain occupies 8–282 (ERVRNIGIAA…AVVNYLPAPV (275 aa)). Residues 17 to 24 (AHIDAGKT), 81 to 85 (DTPGH), and 135 to 138 (NKMD) each bind GTP.

This sequence belongs to the TRAFAC class translation factor GTPase superfamily. Classic translation factor GTPase family. EF-G/EF-2 subfamily.

The protein localises to the cytoplasm. Functionally, catalyzes the GTP-dependent ribosomal translocation step during translation elongation. During this step, the ribosome changes from the pre-translocational (PRE) to the post-translocational (POST) state as the newly formed A-site-bound peptidyl-tRNA and P-site-bound deacylated tRNA move to the P and E sites, respectively. Catalyzes the coordinated movement of the two tRNA molecules, the mRNA and conformational changes in the ribosome. In Prochlorococcus marinus (strain NATL2A), this protein is Elongation factor G.